A 483-amino-acid polypeptide reads, in one-letter code: Keratin, type II cytoskeletal 8 (483 aa).

Polar residues predominate over residues 1–25; that stretch reads MSVRVTQKSYKMSTSGPRAFSSRSF. The segment at 1–43 is disordered; it reads MSVRVTQKSYKMSTSGPRAFSSRSFTSGPGARISSSSFSRVGS. Residues 1-90 are head; that stretch reads MSVRVTQKSY…DPNIQAVRTQ (90 aa). Position 9 is a phosphoserine; by PKC/PRKCE (serine 9). Residue lysine 11 forms a Glycyl lysine isopeptide (Lys-Gly) (interchain with G-Cter in SUMO2) linkage. Serine 13, serine 15, serine 21, and serine 22 each carry phosphoserine. Arginine 23 bears the Omega-N-methylarginine mark. Serine 24 bears the Phosphoserine; by PKC/PRKCE mark. Serine 24 carries the phosphoserine modification. Threonine 26 is subject to Phosphothreonine. Low complexity predominate over residues 26–43; sequence TSGPGARISSSSFSRVGS. Serine 27 is modified (phosphoserine). Arginine 32 is modified (omega-N-methylarginine). Phosphoserine occurs at positions 34, 37, and 39. Omega-N-methylarginine is present on arginine 40. 3 positions are modified to phosphoserine: serine 43, serine 44, and serine 47. Asymmetric dimethylarginine; alternate is present on arginine 49. Arginine 49 carries the post-translational modification Omega-N-methylarginine; alternate. Serine 51 carries the phosphoserine modification. A coil 1A region spans residues 91–126; it reads EKEQIKTLNNKFASFIDKVRFLEQQNKMLETKWSLL. One can recognise an IF rod domain in the interval 91–402; it reads EKEQIKTLNN…KLLEGEESRL (312 aa). N6-malonyllysine is present on lysine 101. Glycyl lysine isopeptide (Lys-Gly) (interchain with G-Cter in SUMO2) cross-links involve residues lysine 122 and lysine 130. A linker 1 region spans residues 127 to 143; that stretch reads QQQKTSRSNMDNMFESY. Residues 144 to 235 are coil 1B; that stretch reads INNLRRQLEA…QIHEEEIREL (92 aa). Lysine 197 participates in a covalent cross-link: Glycyl lysine isopeptide (Lys-Gly) (interchain with G-Cter in SUMO1); alternate. Lysine 197 participates in a covalent cross-link: Glycyl lysine isopeptide (Lys-Gly) (interchain with G-Cter in SUMO2); alternate. Lysine 207 bears the N6-acetyllysine mark. Residues 236 to 259 form a linker 12 region; that stretch reads QSQISDTSVVLSMDNSRSLDMDSI. Phosphoserine is present on residues serine 253, serine 258, and serine 274. The coil 2 stretch occupies residues 260 to 398; that stretch reads IAEVRAQYEE…ATYRKLLEGE (139 aa). A necessary for interaction with PNN region spans residues 261–382; that stretch reads AEVRAQYEEI…EYQELMNVKL (122 aa). Lysine 285 is covalently cross-linked (Glycyl lysine isopeptide (Lys-Gly) (interchain with G-Cter in SUMO2)). A Glycyl lysine isopeptide (Lys-Gly) (interchain with G-Cter in SUMO2); alternate cross-link involves residue lysine 295. At lysine 295 the chain carries N6-acetyllysine; alternate. Lysine 304 participates in a covalent cross-link: Glycyl lysine isopeptide (Lys-Gly) (interchain with G-Cter in SUMO2). Lysine 325 participates in a covalent cross-link: Glycyl lysine isopeptide (Lys-Gly) (interchain with G-Cter in SUMO2); alternate. Lysine 325 is modified (N6-acetyllysine; alternate). Residue lysine 393 forms a Glycyl lysine isopeptide (Lys-Gly) (interchain with G-Cter in SUMO2) linkage. Residues 399-483 are tail; the sequence is ESRLESGMQN…VSESSDIMSK (85 aa). A phosphoserine mark is found at serine 400, serine 404, serine 410, serine 417, serine 424, serine 426, and serine 432. A Glycyl lysine isopeptide (Lys-Gly) (interchain with G-Cter in SUMO1); alternate cross-link involves residue lysine 472. Lysine 472 participates in a covalent cross-link: Glycyl lysine isopeptide (Lys-Gly) (interchain with G-Cter in SUMO2); alternate. Residues serine 475, serine 477, serine 478, and serine 482 each carry the phosphoserine modification.

It belongs to the intermediate filament family. As to quaternary structure, heterotetramer of two type I and two type II keratins. Forms a heterodimer with KRT18. Associates with KRT20. Interacts with PNN. When associated with KRT19, interacts with DMD. Interacts with TCHP. Interacts with APEX1. Interacts with GPER1. Interacts with EPPK1. Interacts with PKP1 and PKP2. Post-translationally, O-glycosylated. O-GlcNAcylation at multiple sites increases solubility, and decreases stability by inducing proteasomal degradation. O-glycosylated (O-GlcNAcylated), in a cell cycle-dependent manner. As to expression, expressed in cardiac and striated muscle. Expressed at Z-lines within the muscle fibers and at Z-line and M-line domains at costameres at the sarcolemmal membrane (at protein level). Observed in coagulating gland, bladder, salivary gland, kidney, spleen, thymus, lung and heart. Also observed in ventral prostate, seminal vesicle and liver where expression increases following castration.

Its subcellular location is the cytoplasm. It localises to the nucleus. The protein localises to the nucleoplasm. The protein resides in the nucleus matrix. In terms of biological role, together with KRT19, helps to link the contractile apparatus to dystrophin at the costameres of striated muscle. This chain is Keratin, type II cytoskeletal 8 (Krt8), found in Rattus norvegicus (Rat).